Consider the following 331-residue polypeptide: Putative peptidyl-prolyl cis-trans isomerase RC0542 (331 aa).

The interval 33–54 (EQTASNNSSTDENQTSINNEPP) is disordered. The PPIase FKBP-type domain maps to 128–226 (GHVVTVFYQI…SNEVKIYDDE (99 aa)).

The enzyme catalyses [protein]-peptidylproline (omega=180) = [protein]-peptidylproline (omega=0). The polypeptide is Putative peptidyl-prolyl cis-trans isomerase RC0542 (Rickettsia conorii (strain ATCC VR-613 / Malish 7)).